The primary structure comprises 208 residues: ATP phosphoribosyltransferase (208 aa).

The protein belongs to the ATP phosphoribosyltransferase family. Short subfamily. Heteromultimer composed of HisG and HisZ subunits.

The protein resides in the cytoplasm. The enzyme catalyses 1-(5-phospho-beta-D-ribosyl)-ATP + diphosphate = 5-phospho-alpha-D-ribose 1-diphosphate + ATP. It participates in amino-acid biosynthesis; L-histidine biosynthesis; L-histidine from 5-phospho-alpha-D-ribose 1-diphosphate: step 1/9. Its function is as follows. Catalyzes the condensation of ATP and 5-phosphoribose 1-diphosphate to form N'-(5'-phosphoribosyl)-ATP (PR-ATP). Has a crucial role in the pathway because the rate of histidine biosynthesis seems to be controlled primarily by regulation of HisG enzymatic activity. This Hydrogenovibrio crunogenus (strain DSM 25203 / XCL-2) (Thiomicrospira crunogena) protein is ATP phosphoribosyltransferase.